The sequence spans 158 residues: MAEVESFQLDHTKVLAPYVRLIGSETGPKGDVITNFDVRFVQPNANAIGMAALHTIEHSMASLIRDRIDGMIDFSPFGCQTGFHMIMWGEHSSEEIAKVIKSSLEELSSDEFGWDNVPGVAEKECGNYRNHSLFGAKEWSKKILAEGISTDPYERKVI.

Fe cation-binding residues include H54, H58, and C125.

This sequence belongs to the LuxS family. In terms of assembly, homodimer. Requires Fe cation as cofactor.

It catalyses the reaction S-(5-deoxy-D-ribos-5-yl)-L-homocysteine = (S)-4,5-dihydroxypentane-2,3-dione + L-homocysteine. Involved in the synthesis of autoinducer 2 (AI-2) which is secreted by bacteria and is used to communicate both the cell density and the metabolic potential of the environment. The regulation of gene expression in response to changes in cell density is called quorum sensing. Catalyzes the transformation of S-ribosylhomocysteine (RHC) to homocysteine (HC) and 4,5-dihydroxy-2,3-pentadione (DPD). This chain is S-ribosylhomocysteine lyase, found in Lactococcus lactis subsp. cremoris (strain MG1363).